A 380-amino-acid polypeptide reads, in one-letter code: Succinyl-diaminopimelate desuccinylase (380 aa).

Position 69 (His69) interacts with Zn(2+). The active site involves Asp71. Asp102 contributes to the Zn(2+) binding site. Glu135 acts as the Proton acceptor in catalysis. Residues Glu136, Glu164, and His353 each coordinate Zn(2+).

This sequence belongs to the peptidase M20A family. DapE subfamily. As to quaternary structure, homodimer. Zn(2+) is required as a cofactor. Co(2+) serves as cofactor.

It catalyses the reaction N-succinyl-(2S,6S)-2,6-diaminopimelate + H2O = (2S,6S)-2,6-diaminopimelate + succinate. It functions in the pathway amino-acid biosynthesis; L-lysine biosynthesis via DAP pathway; LL-2,6-diaminopimelate from (S)-tetrahydrodipicolinate (succinylase route): step 3/3. In terms of biological role, catalyzes the hydrolysis of N-succinyl-L,L-diaminopimelic acid (SDAP), forming succinate and LL-2,6-diaminopimelate (DAP), an intermediate involved in the bacterial biosynthesis of lysine and meso-diaminopimelic acid, an essential component of bacterial cell walls. The polypeptide is Succinyl-diaminopimelate desuccinylase (Cereibacter sphaeroides (strain ATCC 17023 / DSM 158 / JCM 6121 / CCUG 31486 / LMG 2827 / NBRC 12203 / NCIMB 8253 / ATH 2.4.1.) (Rhodobacter sphaeroides)).